The primary structure comprises 491 residues: Keratin, type II microfibrillar, component 7C (491 aa).

Cys-1 bears the Blocked amino end (Cys) mark. The tract at residues 1–109 (CGFSTVGSGF…PNAQCVKQEE (109 aa)) is head. An IF rod domain is found at 109–420 (EKEQIKCLNN…RLLEGEEQRL (312 aa)). A coil 1A region spans residues 110-144 (KEQIKCLNNRFAAFIDKVRFLEQQNKLLETKLQFF). The linker 1 stretch occupies residues 145–154 (QNRQCCESNL). Residues 155-255 (EPLFEGYIET…YQEEIRVLQA (101 aa)) are coil 1B. A linker 12 region spans residues 256–272 (NISDTSVIVKMDNSRDL). Positions 273–416 (NMDCIVAEIK…ATYRRLLEGE (144 aa)) are coil 2. The interval 417–491 (EQRLCEGVGA…GGGSCSLGRC (75 aa)) is tail.

This sequence belongs to the intermediate filament family.

Functionally, wool microfibrillar keratin. This is Keratin, type II microfibrillar, component 7C from Ovis aries (Sheep).